Consider the following 458-residue polypeptide: Transcription factor bHLH10 (458 aa).

The interval Met-1 to Asn-49 is disordered. The bHLH domain occupies Ser-243–Leu-292. The interval Lys-315–Lys-338 is disordered. The segment covering Gly-324–Thr-334 has biased composition (acidic residues).

Homodimer.

It is found in the nucleus. This Arabidopsis thaliana (Mouse-ear cress) protein is Transcription factor bHLH10 (BHLH10).